The following is a 354-amino-acid chain: Abasic site processing protein HMCES (354 aa).

Cysteine 2 functions as the Nucleophile in the catalytic mechanism. At cysteine 2 the chain carries Thiazolidine linkage to a ring-opened DNA abasic site. Glutamate 127 is a catalytic residue. Glycyl lysine isopeptide (Lys-Gly) (interchain with G-Cter in SUMO2) cross-links involve residues lysine 148 and lysine 151. Position 160 is a phosphoserine (serine 160). Residue lysine 276 forms a Glycyl lysine isopeptide (Lys-Gly) (interchain with G-Cter in SUMO2) linkage. Positions 292-354 (ATKSPKKEDS…EPVAKRPYSQ (63 aa)) are disordered. Position 295 is a phosphoserine (serine 295). Basic and acidic residues predominate over residues 296–309 (PKKEDSKTPQKEES). A Glycyl lysine isopeptide (Lys-Gly) (interchain with G-Cter in SUMO2) cross-link involves residue lysine 306. The residue at position 322 (serine 322) is a Phosphoserine. A PIP-box motif is present at residues 332–338 (GLLEQWL). Positions 337–348 (WLKREKEEEPVA) are enriched in basic and acidic residues. Glycyl lysine isopeptide (Lys-Gly) (interchain with G-Cter in SUMO2) cross-links involve residues lysine 339 and lysine 342.

This sequence belongs to the SOS response-associated peptidase family. As to quaternary structure, interacts (via PIP-box motif) with PCNA. Post-translationally, ubiquitinated; the covalent HMCES DNA-protein cross-link is ubiquitinated, leading to its degradation by the proteasome.

It localises to the chromosome. Its activity is regulated as follows. Formation and reversal of DNA-protein cross-link depends on DNA context. Catalyzes formation of the thiazolidine linkage in presence of abasic sites in single-stranded DNA. Mediates the reversal of the thiazolidine cross-link in presence of double stranded DNA. In terms of biological role, sensor of abasic sites in single-stranded DNA (ssDNA) required to preserve genome integrity by promoting error-free repair of abasic sites. Acts as an enzyme that recognizes and binds abasic sites in ssDNA at replication forks and chemically modifies the lesion by forming a covalent cross-link with DNA: forms a stable thiazolidine linkage between a ring-opened abasic site and the alpha-amino and sulfhydryl substituents of its N-terminal catalytic cysteine residue. Promotes error-free repair by protecting abasic sites from translesion synthesis (TLS) polymerases and endonucleases that are error-prone and would generate mutations and double-strand breaks. The HMCES DNA-protein cross-link is then either reversed or degraded. HMCES is able to catalyze the reversal of its thiazolidine cross-link and cycle between a cross-link and a non-cross-linked state depending on DNA context: mediates self-reversal of the thiazolidine cross-link in double stranded DNA, allowing APEX1 to initiate downstream repair of abasic sites. The HMCES DNA-protein cross-link can also be degraded by the SPRTN metalloprotease following unfolding by the BRIP1/FANCJ helicase. Has preference for ssDNA, but can also accommodate double-stranded DNA with 3' or 5' overhang (dsDNA), and dsDNA-ssDNA 3' junction. Plays a protective role during somatic hypermutation of immunoglobulin genes in B-cells: acts via its ability to form covalent cross-links with abasic sites, thereby limiting the accumulation of deletions in somatic hypermutation target regions. Also involved in class switch recombination (CSR) in B-cells independently of the formation of a DNA-protein cross-link: acts by binding and protecting ssDNA overhangs to promote DNA double-strand break repair through the microhomology-mediated alternative-end-joining (Alt-EJ) pathway. Acts as a protease: mediates autocatalytic processing of its N-terminal methionine in order to expose the catalytic cysteine. This chain is Abasic site processing protein HMCES, found in Pongo abelii (Sumatran orangutan).